A 509-amino-acid chain; its full sequence is Ribonuclease Y (509 aa).

The helical transmembrane segment at 5-25 threads the bilayer; it reads IIILLSVFCGIFFICFIICSS. Residues 199–259 enclose the KH domain; sequence TTNIVKLPSD…IRREIATRTL (61 aa). In terms of domain architecture, HD spans 325-418; that stretch reads VLAHSIEVAK…VAIADSISAS (94 aa).

The protein belongs to the RNase Y family.

The protein resides in the cell membrane. Functionally, endoribonuclease that initiates mRNA decay. In Mycoplasma mycoides subsp. mycoides SC (strain CCUG 32753 / NCTC 10114 / PG1), this protein is Ribonuclease Y.